We begin with the raw amino-acid sequence, 354 residues long: Elongation factor Ts (354 aa).

Residues threonine 81 to valine 84 form an involved in Mg(2+) ion dislocation from EF-Tu region.

Belongs to the EF-Ts family.

Its subcellular location is the cytoplasm. Functionally, associates with the EF-Tu.GDP complex and induces the exchange of GDP to GTP. It remains bound to the aminoacyl-tRNA.EF-Tu.GTP complex up to the GTP hydrolysis stage on the ribosome. In Campylobacter curvus (strain 525.92), this protein is Elongation factor Ts.